The sequence spans 385 residues: 1-deoxy-D-xylulose 5-phosphate reductoisomerase (385 aa).

NADPH is bound by residues T10, G11, S12, I13, N38, and N124. K125 provides a ligand contact to 1-deoxy-D-xylulose 5-phosphate. E126 is a binding site for NADPH. D150 is a binding site for Mn(2+). 1-deoxy-D-xylulose 5-phosphate contacts are provided by S151, E152, S176, and H199. Mn(2+) is bound at residue E152. G205 lines the NADPH pocket. 1-deoxy-D-xylulose 5-phosphate is bound by residues S212, N217, K218, and E221. Residue E221 participates in Mn(2+) binding.

It belongs to the DXR family. The cofactor is Mg(2+). It depends on Mn(2+) as a cofactor.

The catalysed reaction is 2-C-methyl-D-erythritol 4-phosphate + NADP(+) = 1-deoxy-D-xylulose 5-phosphate + NADPH + H(+). It participates in isoprenoid biosynthesis; isopentenyl diphosphate biosynthesis via DXP pathway; isopentenyl diphosphate from 1-deoxy-D-xylulose 5-phosphate: step 1/6. In terms of biological role, catalyzes the NADPH-dependent rearrangement and reduction of 1-deoxy-D-xylulose-5-phosphate (DXP) to 2-C-methyl-D-erythritol 4-phosphate (MEP). The polypeptide is 1-deoxy-D-xylulose 5-phosphate reductoisomerase (Clostridium acetobutylicum (strain ATCC 824 / DSM 792 / JCM 1419 / IAM 19013 / LMG 5710 / NBRC 13948 / NRRL B-527 / VKM B-1787 / 2291 / W)).